Reading from the N-terminus, the 155-residue chain is Dau c 1 isoallergen Dau c 1.0401 (155 aa).

Belongs to the BetVI family. Monomer. As to expression, expressed in roots (at protein level). Expressed in roots.

This is Dau c 1 isoallergen Dau c 1.0401 from Daucus carota subsp. sativus (Carrot).